Consider the following 185-residue polypeptide: Ribosome-recycling factor (185 aa).

The disordered stretch occupies residues 143–163; sequence RKDGEAGEDEVARAEKDLDKS.

Belongs to the RRF family.

It is found in the cytoplasm. Functionally, responsible for the release of ribosomes from messenger RNA at the termination of protein biosynthesis. May increase the efficiency of translation by recycling ribosomes from one round of translation to another. This Mycobacterium marinum (strain ATCC BAA-535 / M) protein is Ribosome-recycling factor.